We begin with the raw amino-acid sequence, 1357 residues long: DNA-directed RNA polymerase subunit beta (1357 aa).

It belongs to the RNA polymerase beta chain family. The RNAP catalytic core consists of 2 alpha, 1 beta, 1 beta' and 1 omega subunit. When a sigma factor is associated with the core the holoenzyme is formed, which can initiate transcription.

It carries out the reaction RNA(n) + a ribonucleoside 5'-triphosphate = RNA(n+1) + diphosphate. In terms of biological role, DNA-dependent RNA polymerase catalyzes the transcription of DNA into RNA using the four ribonucleoside triphosphates as substrates. This chain is DNA-directed RNA polymerase subunit beta, found in Pseudomonas fluorescens (strain SBW25).